Here is a 492-residue protein sequence, read N- to C-terminus: Probable endopolygalacturonase D (492 aa).

An N-terminal signal peptide occupies residues M1–G16. C151 and C166 are oxidised to a cystine. PbH1 repeat units lie at residues G216–D238, M258–S280, T281–E319, and S320–S341. N292 is a glycosylation site (N-linked (GlcNAc...) asparagine). Catalysis depends on D334, which acts as the Proton donor. C336 and C352 are disulfide-bonded. The active site involves H356. PbH1 repeat units lie at residues V371–T392, V400–Q422, and T434–G478. Residues N407 and N441 are each glycosylated (N-linked (GlcNAc...) asparagine). 2 disulfides stabilise this stretch: C461–C466 and C484–C491.

The protein belongs to the glycosyl hydrolase 28 family.

It is found in the secreted. It carries out the reaction (1,4-alpha-D-galacturonosyl)n+m + H2O = (1,4-alpha-D-galacturonosyl)n + (1,4-alpha-D-galacturonosyl)m.. Functionally, involved in maceration and soft-rotting of plant tissue. Hydrolyzes the 1,4-alpha glycosidic bonds of de-esterified pectate in the smooth region of the plant cell wall. The sequence is that of Probable endopolygalacturonase D (pgaD) from Aspergillus flavus (strain ATCC 200026 / FGSC A1120 / IAM 13836 / NRRL 3357 / JCM 12722 / SRRC 167).